We begin with the raw amino-acid sequence, 240 residues long: Ribonuclease 3 (240 aa).

In terms of domain architecture, RNase III spans 9-141; it reads VEEFQKETGI…LLAAIYLDQG (133 aa). Glu-54 serves as a coordination point for Mg(2+). Asp-58 is a catalytic residue. Residues Asp-127 and Glu-130 each contribute to the Mg(2+) site. Glu-130 is a catalytic residue. Residues 168-237 enclose the DRBM domain; the sequence is DYKTALQEIV…ARIAYEKLLK (70 aa).

This sequence belongs to the ribonuclease III family. Homodimer. Mg(2+) serves as cofactor.

It is found in the cytoplasm. The catalysed reaction is Endonucleolytic cleavage to 5'-phosphomonoester.. Digests double-stranded RNA. Involved in the processing of primary rRNA transcript to yield the immediate precursors to the large and small rRNAs (23S and 16S). Also processes some mRNAs, and tRNAs when they are encoded in the rRNA operon. Probably processes pre-crRNA and tracrRNA of type II CRISPR loci if present in the organism. This Thermotoga maritima (strain ATCC 43589 / DSM 3109 / JCM 10099 / NBRC 100826 / MSB8) protein is Ribonuclease 3 (rnc).